A 271-amino-acid polypeptide reads, in one-letter code: Aquaporin-11 (271 aa).

At 1-14 the chain is on the cytoplasmic side; the sequence is MSALLGLRPEVQDT. Residues 15 to 35 form a helical membrane-spanning segment; that stretch reads CISLGLMLLFVLFVGLARVIA. Residues 36–41 lie on the Lumenal side of the membrane; it reads RQQLHR. A helical transmembrane segment spans residues 42-62; it reads PVVHAFVLEFLATFQLCCCTH. Residues 63-76 are Cytoplasmic-facing; sequence ELQVLSEQDSAHPT. Residues 77–97 traverse the membrane as a helical segment; that stretch reads WTLTLIYFFSLVHGLTLVGTA. Over 98–166 the chain is Lumenal; sequence SNPCGVMMQM…NPIHTDMSKA (69 aa). The NPC motif lies at 99-101; the sequence is NPC. A helical transmembrane segment spans residues 167–187; the sequence is IIIEAICSFIFHSALLHFQEV. Over 188-194 the chain is Cytoplasmic; that stretch reads RTKLRIH. The helical transmembrane segment at 195–215 threads the bilayer; the sequence is LLAALITFLAYAGGSLTGALF. The short motif at 216 to 218 is the NPA element; sequence NPA. Over 216 to 234 the chain is Lumenal; sequence NPALALSLHFPCFDELFYK. The helical transmembrane segment at 235-255 threads the bilayer; sequence FFVVYWLAPSVGVLMMILMFS. Residues 256–271 are Cytoplasmic-facing; the sequence is FFLPWLHNNQMTNKKE.

Belongs to the MIP/aquaporin (TC 1.A.8) family. AQP11/AQP12 subfamily. In terms of assembly, homodimer; disulfide-linked. Homotetramer. Can also form homomultimer. Not glycosylated. In terms of tissue distribution, highly expressed in the S1 proximal tubule segment,. Expressed in the testis, kidney, and liver. Weakly expressed in the heart, brain, and muscle. Highly expressed in the testis. Expressed in the proximal tubule of the cortex of 8-day-old mouse kidney. Expressed in retina specifically at retinal Mueller glial cells. Expressed in brain. Expressed abundantly at the choroid plexus but also expressed weakly in the parenchyma. Expressed at the capillary endothelium in the cerebral white matter. Expressed in adult testis, in the elongated spermatids (ES) and in residual bodies inside Sertoli cells.

It localises to the endoplasmic reticulum membrane. It is found in the cytoplasmic vesicle membrane. The protein resides in the cell membrane. It catalyses the reaction H2O(in) = H2O(out). The enzyme catalyses glycerol(in) = glycerol(out). The catalysed reaction is H2O2(out) = H2O2(in). Functionally, channel protein that facilitates the transport of water, glycerol and hydrogen peroxide across membrane of cell or organelles guaranteeing intracellular homeostasis in several organes like liver, kidney and brain. In situation of stress, participates in endoplasmic reticulum (ER) homeostasis by regulating redox homeostasis through the transport of hydrogen peroxide across the endoplasmic reticulum membrane thereby regulating the oxidative stress through the NADPH oxidase 2 pathway. Plays a role by maintaining an environment suitable for translation or protein foldings in the ER lumen namely by participating in the PKD1 glycosylation processing resulting in regulation of PKD1 membrane trafficking thereby preventing the accumulation of unfolding protein in ER. Plays a role in the proximal tubule function by regulating its endosomal acidification. May play a role in postnatal kidney development. This is Aquaporin-11 from Mus musculus (Mouse).